The sequence spans 953 residues: Dual serine/threonine and tyrosine protein kinase (953 aa).

One can recognise a Protein kinase domain in the interval 665-926 (PKLEREIGRG…VQSKLQDIYT (262 aa)). ATP contacts are provided by residues 671-679 (IGRGQYGVV) and lysine 694. Residue aspartate 791 is the Proton acceptor of the active site. The disordered stretch occupies residues 932 to 953 (REAEGGGGGGAKEQQNLKSDTL).

It belongs to the protein kinase superfamily. Ser/Thr protein kinase family.

The protein localises to the cytoplasm. It is found in the cell membrane. It localises to the apical cell membrane. The protein resides in the basolateral cell membrane. Its subcellular location is the cell junction. The catalysed reaction is L-seryl-[protein] + ATP = O-phospho-L-seryl-[protein] + ADP + H(+). It carries out the reaction L-threonyl-[protein] + ATP = O-phospho-L-threonyl-[protein] + ADP + H(+). The enzyme catalyses L-tyrosyl-[protein] + ATP = O-phospho-L-tyrosyl-[protein] + ADP + H(+). Functionally, may act as a positive regulator of ERK phosphorylation downstream of fibroblast growth factor-receptor activation. May induce both caspase-dependent apoptosis and caspase-independent cell death. May play a role in the embryonic development. This Strongylocentrotus purpuratus (Purple sea urchin) protein is Dual serine/threonine and tyrosine protein kinase.